The chain runs to 346 residues: Small ribosomal subunit biogenesis GTPase RsgA 1 (346 aa).

The CP-type G domain maps to alanine 93–phenylalanine 248. GTP-binding positions include threonine 138 to aspartate 141 and glycine 190 to serine 198. Residues cysteine 271, cysteine 276, histidine 278, and cysteine 284 each contribute to the Zn(2+) site.

This sequence belongs to the TRAFAC class YlqF/YawG GTPase family. RsgA subfamily. Monomer. Associates with 30S ribosomal subunit, binds 16S rRNA. Zn(2+) serves as cofactor.

Its subcellular location is the cytoplasm. Functionally, one of several proteins that assist in the late maturation steps of the functional core of the 30S ribosomal subunit. Helps release RbfA from mature subunits. May play a role in the assembly of ribosomal proteins into the subunit. Circularly permuted GTPase that catalyzes slow GTP hydrolysis, GTPase activity is stimulated by the 30S ribosomal subunit. In Listeria monocytogenes serovar 1/2a (strain ATCC BAA-679 / EGD-e), this protein is Small ribosomal subunit biogenesis GTPase RsgA 1.